Here is a 569-residue protein sequence, read N- to C-terminus: Anti-Muellerian hormone type-2 receptor (569 aa).

The signal sequence occupies residues 1–17 (MLGTLGLWALLPAAVQA). The Extracellular portion of the chain corresponds to 18–148 (PPNRRTCVFF…AAPGESPWMA (131 aa)). 2 cysteine pairs are disulfide-bonded: cysteine 55-cysteine 79 and cysteine 92-cysteine 109. N-linked (GlcNAc...) asparagine glycosylation occurs at asparagine 66. Asparagine 119 carries an N-linked (GlcNAc...) asparagine glycan. Residues 149–169 (LALLGLVLLLLLLLGGIVVAL) form a helical membrane-spanning segment. Topologically, residues 170-569 (LQRKAYRVQS…PGAACASSDV (400 aa)) are cytoplasmic. Residues 201–511 (LCFSQVIREG…RLVALVHPQE (311 aa)) enclose the Protein kinase domain. ATP is bound by residues 207 to 215 (IREGGHAAV) and lysine 228. The Proton acceptor role is filled by aspartate 331. The disordered stretch occupies residues 512-535 (AQPCPEGRPHSHPEDWPPAPAPAP).

Belongs to the protein kinase superfamily. TKL Ser/Thr protein kinase family. TGFB receptor subfamily. As to quaternary structure, interacts with type I receptor ACVR1. Requires Mg(2+) as cofactor. Mn(2+) is required as a cofactor.

The protein resides in the membrane. It catalyses the reaction L-threonyl-[receptor-protein] + ATP = O-phospho-L-threonyl-[receptor-protein] + ADP + H(+). The catalysed reaction is L-seryl-[receptor-protein] + ATP = O-phospho-L-seryl-[receptor-protein] + ADP + H(+). In terms of biological role, on ligand binding, forms a receptor complex consisting of two type II and two type I transmembrane serine/threonine kinases. Type II receptors phosphorylate and activate type I receptors which autophosphorylate, then bind and activate SMAD transcriptional regulators. Receptor for anti-Muellerian hormone. This Oryctolagus cuniculus (Rabbit) protein is Anti-Muellerian hormone type-2 receptor (AMHR2).